A 1407-amino-acid polypeptide reads, in one-letter code: DNA-directed RNA polymerase subunit beta' (1407 aa).

The Zn(2+) site is built by Cys70, Cys72, Cys85, and Cys88. Residues Asp460, Asp462, and Asp464 each coordinate Mg(2+). 4 residues coordinate Zn(2+): Cys814, Cys888, Cys895, and Cys898. Lys972 carries the N6-acetyllysine modification.

Belongs to the RNA polymerase beta' chain family. As to quaternary structure, the RNAP catalytic core consists of 2 alpha, 1 beta, 1 beta' and 1 omega subunit. When a sigma factor is associated with the core the holoenzyme is formed, which can initiate transcription. Mg(2+) is required as a cofactor. Requires Zn(2+) as cofactor.

It catalyses the reaction RNA(n) + a ribonucleoside 5'-triphosphate = RNA(n+1) + diphosphate. Functionally, DNA-dependent RNA polymerase catalyzes the transcription of DNA into RNA using the four ribonucleoside triphosphates as substrates. The chain is DNA-directed RNA polymerase subunit beta' from Escherichia coli (strain SMS-3-5 / SECEC).